Consider the following 89-residue polypeptide: MALTQERKNEIINEFKTHENDTGSPEVQVAILTEQINTLNEHLRTHKKDHHSRRGLLKMVGQRRNLLTYLRNKDVTRYRNLVDKLGLRR.

Belongs to the universal ribosomal protein uS15 family. Part of the 30S ribosomal subunit. Forms a bridge to the 50S subunit in the 70S ribosome, contacting the 23S rRNA.

Functionally, one of the primary rRNA binding proteins, it binds directly to 16S rRNA where it helps nucleate assembly of the platform of the 30S subunit by binding and bridging several RNA helices of the 16S rRNA. Forms an intersubunit bridge (bridge B4) with the 23S rRNA of the 50S subunit in the ribosome. The chain is Small ribosomal subunit protein uS15 from Halalkalibacterium halodurans (strain ATCC BAA-125 / DSM 18197 / FERM 7344 / JCM 9153 / C-125) (Bacillus halodurans).